Here is a 682-residue protein sequence, read N- to C-terminus: Potassium-transporting ATPase ATP-binding subunit (682 aa).

Transmembrane regions (helical) follow at residues 34 to 54 (PVMFVVWAGSVLTTLLTLAMV), 62 to 82 (ALFTGVISLWLWFTVLFANFA), 219 to 239 (IALTILLIALTIVFLLATATL), and 254 to 274 (VLVALLVCLIPTTIGGLLSAI). The 4-aspartylphosphate intermediate role is filled by Asp307. ATP contacts are provided by residues Asp344, Glu348, 377–384 (FTAQSRMS), and Lys395. Residues Asp518 and Asp522 each contribute to the Mg(2+) site. Transmembrane regions (helical) follow at residues 588–608 (FAIIPAAFAATYPQLNALNVM), 616–636 (AILSAVIFNALIIIFLIPLAL), and 662–682 (LVVPFIGIKVIDVLLTLLGLA).

It belongs to the cation transport ATPase (P-type) (TC 3.A.3) family. Type IA subfamily. The system is composed of three essential subunits: KdpA, KdpB and KdpC.

Its subcellular location is the cell inner membrane. The enzyme catalyses K(+)(out) + ATP + H2O = K(+)(in) + ADP + phosphate + H(+). In terms of biological role, part of the high-affinity ATP-driven potassium transport (or Kdp) system, which catalyzes the hydrolysis of ATP coupled with the electrogenic transport of potassium into the cytoplasm. This subunit is responsible for energy coupling to the transport system and for the release of the potassium ions to the cytoplasm. The protein is Potassium-transporting ATPase ATP-binding subunit of Salmonella schwarzengrund (strain CVM19633).